The chain runs to 495 residues: MIPVVALVGRPNVGKSTLFNRLTRTRDALVADFPGLTRDRKYGRAEVEGHEFIIVDTGGIDGTEDGVETRMAGQSLVAIEEADIVLFMVDARAGLMPADEGIAKHLRSREKTTVLVANKTDGLDPDMVTADFYSLGMGEVYPIAASHGRGVTSLLETVLLPFVQDEIEEPVELSEEEENAAYWAALEADEQASEEEAEDDFNPEDLPIKLAIVGRPNVGKSTLTNRILGEERVVVFDMPGTTRDSIYIPMVRDEREYVLIDTAGVRKRGKVTETVEKFSVIKTLQAIEDANVVLLVIDAREGISDQDLSLLGFILNSGRSLVIVVNKWDGLSQEVREQVKETLDLRLGFIDFARIHFISALHGSGVGNLFESVTEAYACATRRVSTAMLTRIMQMASDDHQPPLVRGRRVKLKYAHAGGYNPPIVVIHGNQVKDLPDSYKRYLMNYYRRSLDVMGTPIRIQFKEGENPFADKRNTLTPNQLRKRKRLMSHIKKGK.

2 EngA-type G domains span residues 3–166 and 208–381; these read PVVA…VQDE and IKLA…ACAT. GTP contacts are provided by residues 9–16, 56–60, 118–121, 214–221, 261–265, and 326–329; these read GRPNVGKS, DTGGI, NKTD, DTAGV, and NKWD. The KH-like domain occupies 382-466; it reads RRVSTAMLTR…PIRIQFKEGE (85 aa).

Belongs to the TRAFAC class TrmE-Era-EngA-EngB-Septin-like GTPase superfamily. EngA (Der) GTPase family. In terms of assembly, associates with the 50S ribosomal subunit.

Functionally, GTPase that plays an essential role in the late steps of ribosome biogenesis. The sequence is that of GTPase Der from Pectobacterium carotovorum subsp. carotovorum (strain PC1).